A 296-amino-acid polypeptide reads, in one-letter code: Factor associated with metabolism and energy (296 aa).

Gly2 is lipidated: N-myristoyl glycine. 2 stretches are compositionally biased toward basic and acidic residues: residues 173–187 (SLHGEARINKQSPRD) and 267–281 (EQGKDEKKPRALVRT). Disordered regions lie at residues 173-204 (SLHGEARINKQSPRDHKAKKTLQSTPRNDDHD) and 256-281 (LLWDSSSSDSDEQGKDEKKPRALVRT).

It is found in the cell membrane. The protein resides in the cytoplasmic vesicle. Its function is as follows. May be involved in tuning the metabolism, energy expenditure, and excretion processes. The polypeptide is Factor associated with metabolism and energy (Homo sapiens (Human)).